Reading from the N-terminus, the 244-residue chain is tRNA1(Val) (adenine(37)-N6)-methyltransferase (244 aa).

This sequence belongs to the methyltransferase superfamily. tRNA (adenine-N(6)-)-methyltransferase family.

Its subcellular location is the cytoplasm. The enzyme catalyses adenosine(37) in tRNA1(Val) + S-adenosyl-L-methionine = N(6)-methyladenosine(37) in tRNA1(Val) + S-adenosyl-L-homocysteine + H(+). Functionally, specifically methylates the adenine in position 37 of tRNA(1)(Val) (anticodon cmo5UAC). The chain is tRNA1(Val) (adenine(37)-N6)-methyltransferase from Photorhabdus laumondii subsp. laumondii (strain DSM 15139 / CIP 105565 / TT01) (Photorhabdus luminescens subsp. laumondii).